Reading from the N-terminus, the 156-residue chain is 6,7-dimethyl-8-ribityllumazine synthase (156 aa).

5-amino-6-(D-ribitylamino)uracil-binding positions include Phe-25, 59–61, and 83–85; these read AFE and AVI. Residue 88–89 coordinates (2S)-2-hydroxy-3-oxobutyl phosphate; it reads GT. The active-site Proton donor is the His-91. Phe-116 is a binding site for 5-amino-6-(D-ribitylamino)uracil. Arg-130 provides a ligand contact to (2S)-2-hydroxy-3-oxobutyl phosphate.

Belongs to the DMRL synthase family.

It carries out the reaction (2S)-2-hydroxy-3-oxobutyl phosphate + 5-amino-6-(D-ribitylamino)uracil = 6,7-dimethyl-8-(1-D-ribityl)lumazine + phosphate + 2 H2O + H(+). It functions in the pathway cofactor biosynthesis; riboflavin biosynthesis; riboflavin from 2-hydroxy-3-oxobutyl phosphate and 5-amino-6-(D-ribitylamino)uracil: step 1/2. Its function is as follows. Catalyzes the formation of 6,7-dimethyl-8-ribityllumazine by condensation of 5-amino-6-(D-ribitylamino)uracil with 3,4-dihydroxy-2-butanone 4-phosphate. This is the penultimate step in the biosynthesis of riboflavin. This is 6,7-dimethyl-8-ribityllumazine synthase from Desulfovibrio desulfuricans (strain ATCC 27774 / DSM 6949 / MB).